We begin with the raw amino-acid sequence, 196 residues long: Imidazoleglycerol-phosphate dehydratase (196 aa).

The protein belongs to the imidazoleglycerol-phosphate dehydratase family.

The protein resides in the cytoplasm. The enzyme catalyses D-erythro-1-(imidazol-4-yl)glycerol 3-phosphate = 3-(imidazol-4-yl)-2-oxopropyl phosphate + H2O. It participates in amino-acid biosynthesis; L-histidine biosynthesis; L-histidine from 5-phospho-alpha-D-ribose 1-diphosphate: step 6/9. This Lachnoclostridium phytofermentans (strain ATCC 700394 / DSM 18823 / ISDg) (Clostridium phytofermentans) protein is Imidazoleglycerol-phosphate dehydratase.